Reading from the N-terminus, the 152-residue chain is Deoxyuridine 5'-triphosphate nucleotidohydrolase (152 aa).

Residues 71–73 (RSG), N84, 88–90 (LID), and M98 each bind substrate.

It belongs to the dUTPase family. It depends on Mg(2+) as a cofactor.

The catalysed reaction is dUTP + H2O = dUMP + diphosphate + H(+). It participates in pyrimidine metabolism; dUMP biosynthesis; dUMP from dCTP (dUTP route): step 2/2. In terms of biological role, this enzyme is involved in nucleotide metabolism: it produces dUMP, the immediate precursor of thymidine nucleotides and it decreases the intracellular concentration of dUTP so that uracil cannot be incorporated into DNA. In Shewanella woodyi (strain ATCC 51908 / MS32), this protein is Deoxyuridine 5'-triphosphate nucleotidohydrolase.